A 702-amino-acid polypeptide reads, in one-letter code: Choline transporter-like protein 5-A (702 aa).

Residues 21–41 (VLCCVLFVIVILGYIALGTVA) form a helical membrane-spanning segment. Residues 42–225 (WIHGDPRKVI…KIVEDYASCW (184 aa)) are Extracellular-facing. N-linked (GlcNAc...) asparagine glycosylation is found at Asn120, Asn173, and Asn180. A helical transmembrane segment spans residues 226–246 (YWIVIGLFIALVISLIFILLL). At 247-249 (RFT) the chain is on the cytoplasmic side. The chain crosses the membrane as a helical span at residues 250–270 (AGFLLWFIIFAVILLVAYGIW). Residues 271 to 308 (HCYWEFAVLRETPGADVTISDIGFQTDLHVYLQLSQTW) lie on the Extracellular side of the membrane. The helical transmembrane segment at 309-329 (LVFMVTLGLTEASIVLMLIFL) threads the bilayer. At 330–334 (RKRVR) the chain is on the cytoplasmic side. A helical transmembrane segment spans residues 335–355 (IAIALLREGSRAISYIMSALF). Over 356–357 (YP) the chain is Extracellular. A helical transmembrane segment spans residues 358–378 (IITFVLLAICISYWAMTALFL). The Cytoplasmic portion of the chain corresponds to 379–443 (ASSGDAVYKV…RYIFILQLCN (65 aa)). The chain crosses the membrane as a helical span at residues 444-464 (LLVFLWLVNFTIALGQCTVAG). The Extracellular segment spans residues 465-498 (AFASYYWARRKPADIPPCPVFSSFSRALRYHTGS). A helical membrane pass occupies residues 499–519 (LAFGSLILAVVQLIRVILEYL). Residues 520–593 (DHKLKGAHNA…RVAVLDKVTD (74 aa)) lie on the Cytoplasmic side of the membrane. Residues 594 to 614 (FLLFLGKLLIAGSVGVIAFFL) form a helical membrane-spanning segment. At 615–632 (FTRKIPIIQEEVPVLNYY) the chain is on the extracellular side. Residues 633 to 653 (CVPLLTVILGSYLIAHSFFSV) form a helical membrane-spanning segment. The Cytoplasmic portion of the chain corresponds to 654–699 (YAMCVDTLFLCFCEDLERNDGTTAKPFFMSPGLKRILGKAEQSPKK).

This sequence belongs to the CTL (choline transporter-like) family.

The protein localises to the cell membrane. It carries out the reaction choline(out) + n H(+)(in) = choline(in) + n H(+)(out). Functionally, choline/H+ antiporter. The protein is Choline transporter-like protein 5-A (slc44a5a) of Danio rerio (Zebrafish).